We begin with the raw amino-acid sequence, 96 residues long: Prokineticin Bv8-like peptide 2 (96 aa).

A signal peptide spans 1–19 (MKCFAQIVVLLLVIAFSHG). 5 cysteine pairs are disulfide-bonded: Cys-26–Cys-38, Cys-32–Cys-50, Cys-37–Cys-78, Cys-60–Cys-86, and Cys-80–Cys-95.

It belongs to the AVIT (prokineticin) family. In terms of tissue distribution, expressed by the skin glands.

The protein resides in the secreted. Potent agonist for both PKR1/PROKR1 and PKR2/PROKR2, and inducer of a potent and long-lasting hyperalgesia. Also potentiates capsaicin-induced TRPV1 current when tested on DRG neurons. At subnanomolar concentrations, this protein both induces potent chemotaxis of macrophages and stimulates LPS-induced production of the pro-inflammatory cytokines IL-1 and IL-12. In vivo, potently stimulates the contraction of the guinea-pig gastrointestinal (GI) smooth muscle (nanomolar concentration) and rabbit aortic rings. The polypeptide is Prokineticin Bv8-like peptide 2 (Bombina maxima (Giant fire-bellied toad)).